The sequence spans 185 residues: Intraflagellar transport protein 22 homolog (185 aa).

GTP-binding positions include 10–17, 63–67, and 123–126; these read GPCESGKT, DCGGD, and HKPG. Ser137 carries the phosphoserine modification.

This sequence belongs to the small GTPase superfamily. Rab family. Component of the IFT complex B, at least composed of IFT20, IFT22, IFT25, IFT27, IFT46, IFT52, TRAF3IP1/IFT54, IFT57, IFT74, IFT80, IFT81, and IFT88. Interacts with IFT88. Interacts with CFAP61.

It localises to the cell projection. The protein localises to the cilium. In terms of biological role, small GTPase-like component of the intraflagellar transport (IFT) complex B. In Homo sapiens (Human), this protein is Intraflagellar transport protein 22 homolog (IFT22).